A 302-amino-acid chain; its full sequence is L-aminoadipate-semialdehyde dehydrogenase-phosphopantetheinyl transferase (302 aa).

CoA contacts are provided by residues arginine 44, 83–88, and 105–108; these read RTGKGK and NVSH. Positions 126 and 178 each coordinate Mg(2+). 178-182 serves as a coordination point for CoA; that stretch reads ESFIK.

It belongs to the P-Pant transferase superfamily. AcpS family. As to quaternary structure, monomer. Mg(2+) is required as a cofactor.

Its subcellular location is the cytoplasm. It localises to the cytosol. The catalysed reaction is apo-[ACP] + CoA = holo-[ACP] + adenosine 3',5'-bisphosphate + H(+). It carries out the reaction apo-[ACP] + acetyl-CoA = acetyl-[ACP] + adenosine 3',5'-bisphosphate + H(+). Functionally, catalyzes the post-translational modification of target proteins by phosphopantetheine. Can transfer the 4'-phosphopantetheine moiety from coenzyme A, regardless of whether the CoA is presented in the free thiol form or as an acetyl thioester, to a serine residue of a broad range of acceptors. The polypeptide is L-aminoadipate-semialdehyde dehydrogenase-phosphopantetheinyl transferase (aasdhppt) (Xenopus laevis (African clawed frog)).